The primary structure comprises 119 residues: MKDKILKDREEIEKFFIKLLGREIFISEMDIFASRCGCVGIMITVRGLFVDDVEIFKEKILNKLEELAKSYDINADWIFVRVLPGSDDIINIGVREFCNICREEYRFKKPRPDLISLKF.

This is an uncharacterized protein from Methanocaldococcus jannaschii (strain ATCC 43067 / DSM 2661 / JAL-1 / JCM 10045 / NBRC 100440) (Methanococcus jannaschii).